Here is a 375-residue protein sequence, read N- to C-terminus: Chaperone protein DnaJ (375 aa).

The J domain occupies 5 to 70 (DYYEVLGVAR…NKRRAYDAHG (66 aa)). The CR-type zinc finger occupies 131–208 (GIERRIEIPT…CHGAGRVEED (78 aa)). Residues Cys144, Cys147, Cys160, Cys163, Cys182, Cys185, Cys196, and Cys199 each contribute to the Zn(2+) site. CXXCXGXG motif repeat units follow at residues 144–151 (CAPCHGSG), 160–167 (CGTCHGRG), 182–189 (CPHCDGRG), and 196–203 (CKTCHGAG).

Belongs to the DnaJ family. As to quaternary structure, homodimer. The cofactor is Zn(2+).

It is found in the cytoplasm. Functionally, participates actively in the response to hyperosmotic and heat shock by preventing the aggregation of stress-denatured proteins and by disaggregating proteins, also in an autonomous, DnaK-independent fashion. Unfolded proteins bind initially to DnaJ; upon interaction with the DnaJ-bound protein, DnaK hydrolyzes its bound ATP, resulting in the formation of a stable complex. GrpE releases ADP from DnaK; ATP binding to DnaK triggers the release of the substrate protein, thus completing the reaction cycle. Several rounds of ATP-dependent interactions between DnaJ, DnaK and GrpE are required for fully efficient folding. Also involved, together with DnaK and GrpE, in the DNA replication of plasmids through activation of initiation proteins. The polypeptide is Chaperone protein DnaJ (Xanthomonas euvesicatoria pv. vesicatoria (strain 85-10) (Xanthomonas campestris pv. vesicatoria)).